The sequence spans 145 residues: uncharacterized protein (145 aa).

This is an uncharacterized protein from Bacillus anthracis.